We begin with the raw amino-acid sequence, 376 residues long: Methionine import ATP-binding protein MetN 2 (376 aa).

The segment at 1 to 25 (MTATAQRQRPIDTTGAGQRAQQAEL) is disordered. The ABC transporter domain maps to 34-273 (VRFINLGKTY…PQHEVSKTLL (240 aa)). 70 to 77 (GRSGAGKS) contacts ATP.

This sequence belongs to the ABC transporter superfamily. Methionine importer (TC 3.A.1.24) family. In terms of assembly, the complex is composed of two ATP-binding proteins (MetN), two transmembrane proteins (MetI) and a solute-binding protein (MetQ).

The protein resides in the cell inner membrane. The catalysed reaction is L-methionine(out) + ATP + H2O = L-methionine(in) + ADP + phosphate + H(+). It catalyses the reaction D-methionine(out) + ATP + H2O = D-methionine(in) + ADP + phosphate + H(+). Its function is as follows. Part of the ABC transporter complex MetNIQ involved in methionine import. Responsible for energy coupling to the transport system. This Pseudomonas syringae pv. syringae (strain B728a) protein is Methionine import ATP-binding protein MetN 2.